The chain runs to 308 residues: GTPase Era (308 aa).

The Era-type G domain occupies 14–181 (RCGFVALIGA…RSTLAEMVPP (168 aa)). Positions 22–29 (GAPNVGKS) are G1. 22–29 (GAPNVGKS) is a binding site for GTP. Positions 48-52 (QTTRA) are G2. The interval 69–72 (DTPG) is G3. GTP contacts are provided by residues 69–73 (DTPGI) and 131–134 (NKVD). Residues 131–134 (NKVD) are G4. The G5 stretch occupies residues 160-162 (IAA). Positions 212-289 (LHQELPYQST…HLFLFVKVRE (78 aa)) constitute a KH type-2 domain.

This sequence belongs to the TRAFAC class TrmE-Era-EngA-EngB-Septin-like GTPase superfamily. Era GTPase family. As to quaternary structure, monomer.

It localises to the cytoplasm. The protein localises to the cell inner membrane. Functionally, an essential GTPase that binds both GDP and GTP, with rapid nucleotide exchange. Plays a role in 16S rRNA processing and 30S ribosomal subunit biogenesis and possibly also in cell cycle regulation and energy metabolism. The polypeptide is GTPase Era (Bradyrhizobium diazoefficiens (strain JCM 10833 / BCRC 13528 / IAM 13628 / NBRC 14792 / USDA 110)).